The chain runs to 95 residues: Small ribosomal subunit protein uS15 (95 aa).

Belongs to the universal ribosomal protein uS15 family. Part of the 30S ribosomal subunit. Forms a bridge to the 50S subunit in the 70S ribosome, contacting the 23S rRNA.

Its function is as follows. One of the primary rRNA binding proteins, it binds directly to 16S rRNA where it helps nucleate assembly of the platform of the 30S subunit by binding and bridging several RNA helices of the 16S rRNA. Functionally, forms an intersubunit bridge (bridge B4) with the 23S rRNA of the 50S subunit in the ribosome. The polypeptide is Small ribosomal subunit protein uS15 (Streptomyces avermitilis (strain ATCC 31267 / DSM 46492 / JCM 5070 / NBRC 14893 / NCIMB 12804 / NRRL 8165 / MA-4680)).